A 187-amino-acid polypeptide reads, in one-letter code: GTP cyclohydrolase 1 (187 aa).

Zn(2+)-binding residues include Cys78, His81, and Cys150.

The protein belongs to the GTP cyclohydrolase I family. As to quaternary structure, homomer.

The enzyme catalyses GTP + H2O = 7,8-dihydroneopterin 3'-triphosphate + formate + H(+). The protein operates within cofactor biosynthesis; 7,8-dihydroneopterin triphosphate biosynthesis; 7,8-dihydroneopterin triphosphate from GTP: step 1/1. This is GTP cyclohydrolase 1 from Brevibacillus brevis (strain 47 / JCM 6285 / NBRC 100599).